A 295-amino-acid polypeptide reads, in one-letter code: Light-independent protochlorophyllide reductase iron-sulfur ATP-binding protein (295 aa).

ATP-binding positions include 39–44 (GIGKST) and Lys68. Ser43 provides a ligand contact to Mg(2+). [4Fe-4S] cluster contacts are provided by Cys124 and Cys158. ATP is bound by residues 209-210 (NR) and 233-235 (PDL).

The protein belongs to the NifH/BchL/ChlL family. In terms of assembly, homodimer. Protochlorophyllide reductase is composed of three subunits; BchL, BchN and BchB. It depends on [4Fe-4S] cluster as a cofactor.

The catalysed reaction is chlorophyllide a + oxidized 2[4Fe-4S]-[ferredoxin] + 2 ADP + 2 phosphate = protochlorophyllide a + reduced 2[4Fe-4S]-[ferredoxin] + 2 ATP + 2 H2O. It participates in porphyrin-containing compound metabolism; bacteriochlorophyll biosynthesis (light-independent). Component of the dark-operative protochlorophyllide reductase (DPOR) that uses Mg-ATP and reduced ferredoxin to reduce ring D of protochlorophyllide (Pchlide) to form chlorophyllide a (Chlide). This reaction is light-independent. The L component serves as a unique electron donor to the NB-component of the complex, and binds Mg-ATP. The protein is Light-independent protochlorophyllide reductase iron-sulfur ATP-binding protein of Rhodospirillum rubrum (strain ATCC 11170 / ATH 1.1.1 / DSM 467 / LMG 4362 / NCIMB 8255 / S1).